The primary structure comprises 168 residues: uncharacterized protein (168 aa).

Residues 1-15 (MKRIISSSKSLKQLS) are compositionally biased toward low complexity. Positions 1-107 (MKRIISSSKS…NNNNNNNNNN (107 aa)) are disordered. A compositionally biased stretch (acidic residues) spans 33-47 (SDSDSDSDSDSDSDS). Low complexity predominate over residues 48–107 (DSNSNSNSNSNSNSNSNSNSNSNSNSNNNNNNTNNNNNNNNNNNNNNNNNNNNNNNNNNN).

This is an uncharacterized protein from Dictyostelium discoideum (Social amoeba).